An 829-amino-acid chain; its full sequence is Probable beta-glucosidase H (829 aa).

The N-linked (GlcNAc...) asparagine glycan is linked to Asn13. Asp225 is an active-site residue. Residues Asn304, Asn473, Asn602, Asn627, Asn664, and Asn749 are each glycosylated (N-linked (GlcNAc...) asparagine). Positions 389-548 constitute a PA14 domain; the sequence is RMLSNAVIHF…DPEQMVANAV (160 aa).

The protein belongs to the glycosyl hydrolase 3 family.

It is found in the secreted. The catalysed reaction is Hydrolysis of terminal, non-reducing beta-D-glucosyl residues with release of beta-D-glucose.. It participates in glycan metabolism; cellulose degradation. Beta-glucosidases are one of a number of cellulolytic enzymes involved in the degradation of cellulosic biomass. Catalyzes the last step releasing glucose from the inhibitory cellobiose. The chain is Probable beta-glucosidase H (bglH) from Aspergillus fumigatus (strain CBS 144.89 / FGSC A1163 / CEA10) (Neosartorya fumigata).